The primary structure comprises 340 residues: Glyceraldehyde-3-phosphate dehydrogenase 2 (340 aa).

Residues Arg-12–Ile-13, Arg-78, and Thr-120 each bind NADP(+). D-glyceraldehyde 3-phosphate contacts are provided by residues Ser-151–Thr-153 and Thr-182. The active-site Nucleophile is the Cys-152. Asn-183 contributes to the NADP(+) binding site. D-glyceraldehyde 3-phosphate contacts are provided by residues Arg-197, Thr-210–Gly-211, and Arg-233. Asn-315 contacts NADP(+).

It belongs to the glyceraldehyde-3-phosphate dehydrogenase family. As to quaternary structure, homotetramer. Interacts with BrxC. Post-translationally, in response to oxidative stress, the active site Cys likely reacts with bacillithiol (BSH) to form mixed disulfides to protect the Cys residue against overoxidation. S-bacillithiolation presumably leads to loss of catalytic activity. Debacillithiolation by monothiol bacilliredoxin BrxC restores the activity.

The protein resides in the cytoplasm. It catalyses the reaction D-glyceraldehyde 3-phosphate + phosphate + NADP(+) = (2R)-3-phospho-glyceroyl phosphate + NADPH + H(+). It carries out the reaction D-glyceraldehyde 3-phosphate + phosphate + NAD(+) = (2R)-3-phospho-glyceroyl phosphate + NADH + H(+). The protein operates within carbohydrate biosynthesis; gluconeogenesis. In terms of biological role, involved in the gluconeogenesis. Catalyzes the oxidative phosphorylation of glyceraldehyde 3-phosphate (G3P) to 1,3-bisphosphoglycerate (BPG) using the cofactor NADP. The first reaction step involves the formation of a hemiacetal intermediate between G3P and a cysteine residue, and this hemiacetal intermediate is then oxidized to a thioester, with concomitant reduction of NADP to NADPH. The reduced NADPH is then exchanged with the second NADP, and the thioester is attacked by a nucleophilic inorganic phosphate to produce BPG. The polypeptide is Glyceraldehyde-3-phosphate dehydrogenase 2 (Bacillus subtilis (strain 168)).